We begin with the raw amino-acid sequence, 158 residues long: Transcription elongation factor GreA (158 aa).

Residues 49–69 (SEYESAKDEQAFVEGRISQIE) are a coiled coil. A disordered region spans residues 102–125 (EEPESYTIVGESESDPLSGKISNE).

This sequence belongs to the GreA/GreB family.

Functionally, necessary for efficient RNA polymerase transcription elongation past template-encoded arresting sites. The arresting sites in DNA have the property of trapping a certain fraction of elongating RNA polymerases that pass through, resulting in locked ternary complexes. Cleavage of the nascent transcript by cleavage factors such as GreA or GreB allows the resumption of elongation from the new 3'terminus. GreA releases sequences of 2 to 3 nucleotides. The sequence is that of Transcription elongation factor GreA from Limosilactobacillus fermentum (strain NBRC 3956 / LMG 18251) (Lactobacillus fermentum).